A 134-amino-acid polypeptide reads, in one-letter code: Arsenate reductase 1 (134 aa).

Catalysis depends on nucleophile residues Cys11, Cys83, and Cys90. 2 cysteine pairs are disulfide-bonded: Cys11/Cys83 and Cys83/Cys90.

Belongs to the low molecular weight phosphotyrosine protein phosphatase family. Thioredoxin-coupled ArsC subfamily.

It localises to the cytoplasm. It carries out the reaction arsenate + [thioredoxin]-dithiol + H(+) = arsenite + [thioredoxin]-disulfide + H2O. Catalyzes the reduction of arsenate [As(V)] to arsenite [As(III)]. This chain is Arsenate reductase 1, found in Bacillus cereus (strain ATCC 10987 / NRS 248).